The primary structure comprises 206 residues: RNA-free ribonuclease P (206 aa).

The segment at 187-206 (NLAGDDPGHAPPCGPDQPAG) is disordered. The span at 195–206 (HAPPCGPDQPAG) shows a compositional bias: pro residues.

The protein belongs to the HARP family.

It catalyses the reaction Endonucleolytic cleavage of RNA, removing 5'-extranucleotides from tRNA precursor.. In terms of biological role, RNA-free RNase P that catalyzes the removal of the 5'-leader sequence from pre-tRNA to produce the mature 5'-terminus. This Halorhodospira halophila (strain DSM 244 / SL1) (Ectothiorhodospira halophila (strain DSM 244 / SL1)) protein is RNA-free ribonuclease P.